The following is a 285-amino-acid chain: Thrombin-like enzyme TLBm (285 aa).

The region spanning 1–273 (VIGGDECNIN…HLDWSQSVIA (273 aa)) is the Peptidase S1 domain. 6 disulfides stabilise this stretch: cysteine 7-cysteine 181, cysteine 30-cysteine 46, cysteine 94-cysteine 284, cysteine 156-cysteine 234, cysteine 192-cysteine 209, and cysteine 224-cysteine 249. Active-site charge relay system residues include histidine 45 and aspartate 113. Serine 228 (charge relay system) is an active-site residue.

The protein belongs to the peptidase S1 family. Snake venom subfamily. In terms of assembly, monomer. Homologous thrombin-like enzymes are N-glycosylated. This enzyme does not contain the consensus glycosylation sites, suggesting it is not glycosylated. In terms of tissue distribution, expressed by the venom gland.

The protein localises to the secreted. With respect to regulation, inhibited by PMSF, disodium-EDTA, S(Dm) and soybean trypsin inhibitor (SBTI). SBTI and S(Dm) (the anti-hemorrhagic protein) acts as a non-competitive inhibitors that decrease the enzymatic activity. Functionally, thrombin-like enzyme that induces the formation of fibrin clot. Cleaves the Aalpha-chain of fibrinogen (FGA) with higher activity than the Bbeta-chain (FGB). Induces platelet aggregation in both platelet-rich plasma and in washed platelet preparations. This aggregation is strongly inhibited by preincubation of the enzyme with PMSF. In Bothrops marajoensis (Marajo lancehead), this protein is Thrombin-like enzyme TLBm.